We begin with the raw amino-acid sequence, 171 residues long: Shikimate kinase (171 aa).

Residue 14–19 coordinates ATP; that stretch reads GAGKST. Residue Ser-18 participates in Mg(2+) binding. Substrate contacts are provided by Asp-36, Arg-60, and Gly-82. Arg-120 contributes to the ATP binding site. Arg-139 contacts substrate. Position 156 (Gln-156) interacts with ATP.

This sequence belongs to the shikimate kinase family. As to quaternary structure, monomer. Mg(2+) is required as a cofactor.

The protein resides in the cytoplasm. The catalysed reaction is shikimate + ATP = 3-phosphoshikimate + ADP + H(+). It participates in metabolic intermediate biosynthesis; chorismate biosynthesis; chorismate from D-erythrose 4-phosphate and phosphoenolpyruvate: step 5/7. Its function is as follows. Catalyzes the specific phosphorylation of the 3-hydroxyl group of shikimic acid using ATP as a cosubstrate. In Shewanella pealeana (strain ATCC 700345 / ANG-SQ1), this protein is Shikimate kinase.